Consider the following 126-residue polypeptide: Ribosome-binding factor A (126 aa).

Belongs to the RbfA family. In terms of assembly, monomer. Binds 30S ribosomal subunits, but not 50S ribosomal subunits or 70S ribosomes.

The protein localises to the cytoplasm. One of several proteins that assist in the late maturation steps of the functional core of the 30S ribosomal subunit. Associates with free 30S ribosomal subunits (but not with 30S subunits that are part of 70S ribosomes or polysomes). Required for efficient processing of 16S rRNA. May interact with the 5'-terminal helix region of 16S rRNA. The protein is Ribosome-binding factor A of Azoarcus sp. (strain BH72).